The chain runs to 635 residues: DNA-directed RNA polymerase III subunit rpc3 (635 aa).

Disordered regions lie at residues Pro-131 to Gln-164, Val-246 to Thr-295, and Ser-386 to Gly-424. A compositionally biased stretch (acidic residues) spans Ser-272–Gly-292. A compositionally biased stretch (basic and acidic residues) spans Asp-398–Glu-407. Residues Asn-411 to Gly-424 are compositionally biased toward polar residues. Positions Thr-562–Phe-583 are leucine-zipper.

Belongs to the RNA polymerase beta chain family. As to quaternary structure, component of the RNA polymerase III (Pol III) complex consisting of 17 subunits.

It is found in the nucleus. Its function is as follows. DNA-dependent RNA polymerase catalyzes the transcription of DNA into RNA using the four ribonucleoside triphosphates as substrates. Specific core component of RNA polymerase III which synthesizes small RNAs, such as 5S rRNA and tRNAs. The chain is DNA-directed RNA polymerase III subunit rpc3 (rpc82) from Aspergillus clavatus (strain ATCC 1007 / CBS 513.65 / DSM 816 / NCTC 3887 / NRRL 1 / QM 1276 / 107).